Reading from the N-terminus, the 434-residue chain is Prenyltransferase penG (434 aa).

Composition is skewed to polar residues over residues 1 to 14 and 21 to 35; these read MTQD…QTAG and THSN…PSTW. Positions 1–35 are disordered; that stretch reads MTQDVVTVSSQTAGTIKESGTHSNPDNKTTSPSTW. L-tryptophan contacts are provided by residues 104–105 and Glu-108; that span reads EI. Substrate contacts are provided by Arg-122, Lys-208, Arg-275, Lys-277, Tyr-279, and Tyr-348.

The protein belongs to the tryptophan dimethylallyltransferase family.

It carries out the reaction yaequinolone E + dimethylallyl diphosphate + H2O = [(1'E)-3'-hydroxy-3',7'-dimethylocta-1',6'-dien-1'-yl]-quinolinone B + diphosphate. It functions in the pathway secondary metabolite biosynthesis. Its pathway is alkaloid biosynthesis. The protein operates within mycotoxin biosynthesis. Functionally, prenyltransferase; part of the gene cluster that mediates the biosynthesis of penigequinolones, potent insecticidal alkaloids that contain a highly modified 10-carbon prenyl group. The first stage is catalyzed by the nonribosomal peptide synthetase penN that condenses anthranilic acid and O-methyl-L-tyrosine to produce 4'-methoxycyclopeptin. 4'-methoxycyclopeptin is then converted to 4'-methoxydehydrocyclopeptin by the ketoglutarate-dependent dioxygenase penM through dehydrogenation to form a double bond between C-alpha and C-beta of the O-methyltyrosine side chain. PenM also converts its first product methoxydehydrocyclopeptin to 4'-methoxycyclopenin. The following conversion of 4'methoxycyclopenin into 4'-methoxyviridicatin is catalyzed by the cyclopenase penL. 4'-methoxyviridicatin is the precursor of quinolone natural products, and is further converted to quinolinone B. The prenyltransferase penI then catalyzes the canonical Friedel-Crafts alkylation of quinolinone B with dimethylallyl cation to yield dimethylallyl quinolone, which is subjected to FAD-dependent dehydrogenation by the FAD-linked oxidoreductase penH to yield conjugated aryl diene. The delta(3') double bond then serves as the site of the second alkylation with DMAPP catalyzed by the prenyltransferase penG to yield a carbenium ion intermediate, which can be attacked by H(2)O to yield a styrenyl quinolone containing a C3'-hydroxyprenyl chain, or undergo cyclization to yield yaequinolones J1 and J2. The conversion of the styrenyl quinolone into the tetrahydrofuran-containing yaequinolone C is performed by the FAD-dependent monooxygenase penE and involves epoxidation of the terminal C7'-C8' olefin, followed by epoxide ring opening initiated by the C3' hydroxyl group. The predicted cysteine hydrolase penJ acts as an epoxide hydrolase that enhances the rate of the 5-exo-tet cyclization step, increasing the yield of yaequinolone C. PenF catalyzes the cationic rearrangement of the epoxide formed by penE (before ring opening to produce yaequinolone C) into yaequinolone D. Finally, the short-chain dehydrogenase/reductase (SDR)-like reductase penD, catalyzes both the dehydration of yaequinolone D and the reduction of the resulting oxonium to yield penigequinolone. In Penicillium thymicola, this protein is Prenyltransferase penG.